A 234-amino-acid polypeptide reads, in one-letter code: S-adenosylmethionine synthase 1 (234 aa).

ATP contacts are provided by residues 10–12 (DGK), 78–81 (SGRF), D89, 95–96 (RK), A112, K116, and K120. D89 provides a ligand contact to L-methionine. K120 lines the L-methionine pocket.

It belongs to the AdoMet synthase family. In terms of assembly, homotetramer. It depends on Mn(2+) as a cofactor. The cofactor is Mg(2+). Co(2+) serves as cofactor. K(+) is required as a cofactor. Mainly in floral buds and roots.

The protein resides in the cytoplasm. The catalysed reaction is L-methionine + ATP + H2O = S-adenosyl-L-methionine + phosphate + diphosphate. Its pathway is amino-acid biosynthesis; S-adenosyl-L-methionine biosynthesis; S-adenosyl-L-methionine from L-methionine: step 1/1. Functionally, catalyzes the formation of S-adenosylmethionine from methionine and ATP. The reaction comprises two steps that are both catalyzed by the same enzyme: formation of S-adenosylmethionine (AdoMet) and triphosphate, and subsequent hydrolysis of the triphosphate. The chain is S-adenosylmethionine synthase 1 (SMS-1) from Petroselinum crispum (Parsley).